The following is a 525-amino-acid chain: M-phase inducer phosphatase 1 (525 aa).

Residues 73-83 (MGSSESTDSGF) carry the Phosphodegron motif. Position 75 is a phosphoserine; by CHEK1 (serine 75). A phosphoserine; by NEK11 mark is found at serine 78, serine 81, and serine 87. Serine 106 bears the Phosphoserine mark. A Phosphoserine; by CHEK1 and CHEK2 modification is found at serine 123. The KEN box motif lies at 140–142 (KEN). At serine 177 the chain carries Phosphoserine; by CHEK1. Disordered regions lie at residues 179–204 (PARMLSSNERDGNEPGNSIPFMPQSP) and 262–308 (SASC…PEKP). A phosphoserine; by CHEK1 and CHEK2 mark is found at serine 279 and serine 293. Over residues 294-306 (VAGASPEEAASPE) the composition is skewed to low complexity. Serine 322 is subject to Phosphoserine. A Rhodanese domain is found at 377–483 (LIKEFVIIDC…FFLKCQSHCE (107 aa)). Residue cysteine 432 is part of the active site. Threonine 508 carries the post-translational modification Phosphothreonine; by CHEK1. Phosphoserine; by PLK3 is present on residues serine 514 and serine 520.

Belongs to the MPI phosphatase family. As to quaternary structure, interacts with CCNB1/cyclin B1. Interacts with YWHAE/14-3-3 epsilon when phosphorylated. Interacts with CUL1 specifically when CUL1 is neddylated and active. Interacts with BTRC/BTRCP1 and FBXW11/BTRCP2. Interactions with CUL1, BTRC and FBXW11 are enhanced upon DNA damage. Interacts with HSP90AB1; prevents heat shock-mediated CDC25A degradation and contributes to cell cycle progression. Phosphorylated by CHEK1 on Ser-75, Ser-123, Ser-177, Ser-279, Ser-293 and Thr-508 during checkpoint mediated cell cycle arrest. Also phosphorylated by CHEK2 on Ser-123, Ser-279, and Ser-293 during checkpoint mediated cell cycle arrest. Phosphorylation on Ser-177 and Thr-508 creates binding sites for YWHAE/14-3-3 epsilon which inhibits CDC25A. Phosphorylation on Ser-75, Ser-123, Ser-177, Ser-279 and Ser-293 may also promote ubiquitin-dependent proteolysis of CDC25A by the SCF complex. Phosphorylation of CDC25A at Ser-75 by CHEK1 primes it for subsequent phosphorylation at Ser-78, Ser-81 and Ser-87 by NEK11. Phosphorylation by NEK11 is required for BTRC-mediated polyubiquitination and degradation. Phosphorylation by PIM1 leads to an increase in phosphatase activity. Phosphorylated by PLK3 following DNA damage, leading to promote its ubiquitination and degradation. Post-translationally, ubiquitinated by the anaphase promoting complex/cyclosome (APC/C) ubiquitin ligase complex that contains FZR1/CDH1 during G1 phase leading to its degradation by the proteasome. Ubiquitinated by a SCF complex containing BTRC and FBXW11 during S phase leading to its degradation by the proteasome. Deubiquitination by USP17L2/DUB3 leads to its stabilization.

The catalysed reaction is O-phospho-L-tyrosyl-[protein] + H2O = L-tyrosyl-[protein] + phosphate. Its activity is regulated as follows. Stimulated by B-type cyclins. Stimulated by PIM1-mediated phosphorylation. Its function is as follows. Tyrosine protein phosphatase which functions as a dosage-dependent inducer of mitotic progression. Directly dephosphorylates CDK1 and stimulates its kinase activity. Also dephosphorylates CDK2 in complex with cyclin-E, in vitro. The chain is M-phase inducer phosphatase 1 (CDC25A) from Bos taurus (Bovine).